The following is a 358-amino-acid chain: 3-dehydroquinate synthase (358 aa).

NAD(+) contacts are provided by residues 70 to 75 (DGEQFK), 104 to 108 (GVIGD), 128 to 129 (TT), K141, K150, and 168 to 171 (CLHT). Residues E183, H246, and H263 each coordinate Zn(2+).

The protein belongs to the sugar phosphate cyclases superfamily. Dehydroquinate synthase family. It depends on Co(2+) as a cofactor. Zn(2+) is required as a cofactor. Requires NAD(+) as cofactor.

It localises to the cytoplasm. The enzyme catalyses 7-phospho-2-dehydro-3-deoxy-D-arabino-heptonate = 3-dehydroquinate + phosphate. It functions in the pathway metabolic intermediate biosynthesis; chorismate biosynthesis; chorismate from D-erythrose 4-phosphate and phosphoenolpyruvate: step 2/7. Catalyzes the conversion of 3-deoxy-D-arabino-heptulosonate 7-phosphate (DAHP) to dehydroquinate (DHQ). This Shewanella baltica (strain OS195) protein is 3-dehydroquinate synthase.